The primary structure comprises 1071 residues: MKLIYTEMSYSMTEILVNEARKAADQGYRVFYIAPNSLSFEKEREVLTLLPERGTFSIIVTRFVQMSRYFTVESSPSKQHLDDTTLAMIFYRTLMQLKPEDLPSYGRLQNNSVFIEQLVELYKELKNAQLSVHDLTGLDHPQKQEDLIKIIELAETIMIQQDYNQDSPLQSFARAIKLGLLNNQLSKTVVVIDGFSRFSAEEDYLLSLLNNNCQEVIIGSYVSQKAYQKSFIKGNIYEASLHFLQDLAQKYHIKPVFATSNQVFKPAFSRLTQLFEATHDFSQVDWQLQKNDLDHFSLWQCHHQKEEIEHVAKSIRQKLYEGYRYKDILVLLGDMDAYQLQIGPIFDKFEIPYYLGKAEPMAAHPLVQFIESLERSQRYNWRREDILNMLKSGLFGCFDDSDIDRFEEYTQFADIKGFTKFSKPFTINSSRQYPLDFLNEMRQDIVLPLQELFKSQKQLGASLVDKLILFLKKIRLAENMQGLAQSQLEVEKNEEVWKRFTDILTSFHHIFGQEKLRLSDCLALIKTGMKSAQYRVVPATLDVVTIKSYDLVQPHSKPFVYAIGLTQSHFPKQIHHSGLLSDQERARINEIRNYRHFDIASAENSKKNHQTALSLFNAATKELVLSVPTVINETFDDLSPYLKELINFGLPLLDKGKNYLSYDNSDIANYKALLSQIIAINRQDLIEMSDQDKMFWTVVLRYLRKQLRKQQLELPTSDYRLSTKPLSKEVIEVCFPKGIPLKLSATALTVFYNNQYNYFLKYVLNLNKTESIHPDSRIHGQYLHRVFERLMKDHTQEPFDNKLKQAIYHTNQESFFQQVYQDNAEAEYSLAILEDIVRSTAPILQLNQNIQVIDQEKNFQLDMGNEILVHGIIDRIDQLSDGSLGIVDYKSSANQFDIGTFYNGLSPQLVTYLAALKQIAPHDINQLFGAMYLHLQDPKLDLVTFKQIDNTLVESIYKALTYKGIFSEVEKEHLSTGAYQTKNALYSNDELETLLNYNKYLYLKAAKHIKKGHFLINPYTSDGKTVQGDQLKAITRFEADLDMGQARRLVTLPAKEKKECFLTLMRKESHL.

Belongs to the helicase family. AddB/RexB type 2 subfamily. As to quaternary structure, heterodimer of AddA and RexB. Mg(2+) is required as a cofactor.

In terms of biological role, the heterodimer acts as both an ATP-dependent DNA helicase and an ATP-dependent, dual-direction single-stranded exonuclease. Recognizes the chi site generating a DNA molecule suitable for the initiation of homologous recombination. This subunit has 5' -&gt; 3' nuclease activity but not helicase activity. This Streptococcus pyogenes serotype M4 (strain MGAS10750) protein is ATP-dependent helicase/deoxyribonuclease subunit B.